Consider the following 245-residue polypeptide: Adapter protein MecA (245 aa).

The protein belongs to the MecA family. As to quaternary structure, homodimer.

Enables the recognition and targeting of unfolded and aggregated proteins to the ClpC protease or to other proteins involved in proteolysis. This chain is Adapter protein MecA, found in Streptococcus pneumoniae serotype 19F (strain G54).